A 529-amino-acid polypeptide reads, in one-letter code: uncharacterized protein (529 aa).

Residues 1-20 (MGADLKQPQDADSPPKGVSR) are disordered. A signal peptide (tat-type signal) is located at residues 1–52 (MGADLKQPQDADSPPKGVSRRRFLTTGAAAVVGTGVGAGGTALLSSHPRGPA).

Post-translationally, predicted to be exported by the Tat system. The position of the signal peptide cleavage has not been experimentally proven.

This is an uncharacterized protein from Mycobacterium tuberculosis (strain CDC 1551 / Oshkosh).